A 347-amino-acid polypeptide reads, in one-letter code: Isopentenyl-diphosphate delta-isomerase (347 aa).

11 to 12 provides a ligand contact to substrate; the sequence is RK. FMN contacts are provided by residues 72 to 74, Ser-102, and Asn-131; that span reads AMT. Gln-161 contacts substrate. Glu-162 lines the Mg(2+) pocket. FMN contacts are provided by residues Lys-192, Thr-222, and 287–288; that span reads AG.

It belongs to the IPP isomerase type 2 family. As to quaternary structure, homooctamer. Dimer of tetramers. Requires FMN as cofactor. NADPH serves as cofactor. It depends on Mg(2+) as a cofactor.

The protein resides in the cytoplasm. The enzyme catalyses isopentenyl diphosphate = dimethylallyl diphosphate. Functionally, involved in the biosynthesis of isoprenoids. Catalyzes the 1,3-allylic rearrangement of the homoallylic substrate isopentenyl (IPP) to its allylic isomer, dimethylallyl diphosphate (DMAPP). This is Isopentenyl-diphosphate delta-isomerase from Lactococcus lactis subsp. lactis (strain IL1403) (Streptococcus lactis).